The chain runs to 540 residues: GMP synthase [glutamine-hydrolyzing] (540 aa).

The Glutamine amidotransferase type-1 domain maps to 29 to 222; the sequence is KILIVDFGSQ…VRKVAGLTGD (194 aa). Catalysis depends on Cys-106, which acts as the Nucleophile. Residues His-196 and Glu-198 contribute to the active site. The 193-residue stretch at 223 to 415 folds into the GMPS ATP-PPase domain; sequence WTMRAFREEA…LGLPEIFVGR (193 aa). ATP is bound at residue 250–256; sequence SGGVDSA.

In terms of assembly, homodimer.

It carries out the reaction XMP + L-glutamine + ATP + H2O = GMP + L-glutamate + AMP + diphosphate + 2 H(+). The protein operates within purine metabolism; GMP biosynthesis; GMP from XMP (L-Gln route): step 1/1. Functionally, catalyzes the synthesis of GMP from XMP. This Rhodopseudomonas palustris (strain HaA2) protein is GMP synthase [glutamine-hydrolyzing].